Reading from the N-terminus, the 219-residue chain is tRNA (guanine-N(7)-)-methyltransferase (219 aa).

E46, E71, N100, and D122 together coordinate S-adenosyl-L-methionine. D122 is a catalytic residue. Substrate contacts are provided by residues K126, D158, and 199–202; that span reads TEYE.

It belongs to the class I-like SAM-binding methyltransferase superfamily. TrmB family.

It carries out the reaction guanosine(46) in tRNA + S-adenosyl-L-methionine = N(7)-methylguanosine(46) in tRNA + S-adenosyl-L-homocysteine. It participates in tRNA modification; N(7)-methylguanine-tRNA biosynthesis. In terms of biological role, catalyzes the formation of N(7)-methylguanine at position 46 (m7G46) in tRNA. In Leuconostoc mesenteroides subsp. mesenteroides (strain ATCC 8293 / DSM 20343 / BCRC 11652 / CCM 1803 / JCM 6124 / NCDO 523 / NBRC 100496 / NCIMB 8023 / NCTC 12954 / NRRL B-1118 / 37Y), this protein is tRNA (guanine-N(7)-)-methyltransferase.